The chain runs to 39 residues: Photosystem II reaction center protein Psb30 (39 aa).

A helical transmembrane segment spans residues 12 to 32 (IFQLTFVALIMLAGPFVIFLL).

Belongs to the Psb30/Ycf12 family. As to quaternary structure, PSII is composed of 1 copy each of membrane proteins PsbA, PsbB, PsbC, PsbD, PsbE, PsbF, PsbH, PsbI, PsbJ, PsbK, PsbL, PsbM, PsbT, PsbX, PsbY, PsbZ, Psb30/Ycf12, peripheral proteins PsbO, CyanoQ (PsbQ), PsbU, PsbV and a large number of cofactors. It forms dimeric complexes.

It localises to the cellular thylakoid membrane. Its function is as follows. A core subunit of photosystem II (PSII), probably helps stabilize the reaction center. This Microcystis aeruginosa (strain NIES-843 / IAM M-2473) protein is Photosystem II reaction center protein Psb30.